The following is a 127-amino-acid chain: UPF0716 protein YtzA (127 aa).

4 consecutive transmembrane segments (helical) span residues 3–22 (FLFLLFIVFPAIEIGIFLFL), 26–46 (IGILPTVLFMILTGIIGAAAA), 70–90 (AIADGLCIFIGGLLLMLPGFL), and 93–115 (LAGACLLIPFTRGWCKPILFKWL).

It belongs to the UPF0716 (FxsA) family.

It localises to the cell membrane. The chain is UPF0716 protein YtzA (ytzA) from Bacillus subtilis (strain 168).